Reading from the N-terminus, the 115-residue chain is NADH-ubiquinone oxidoreductase chain 3 (115 aa).

3 helical membrane passes run alanine 4–leucine 24, phenylalanine 55–leucine 75, and leucine 84–tyrosine 104.

The protein belongs to the complex I subunit 3 family. Core subunit of respiratory chain NADH dehydrogenase (Complex I) which is composed of 45 different subunits. Interacts with TMEM186. Interacts with TMEM242.

It is found in the mitochondrion inner membrane. The catalysed reaction is a ubiquinone + NADH + 5 H(+)(in) = a ubiquinol + NAD(+) + 4 H(+)(out). Its function is as follows. Core subunit of the mitochondrial membrane respiratory chain NADH dehydrogenase (Complex I) which catalyzes electron transfer from NADH through the respiratory chain, using ubiquinone as an electron acceptor. Essential for the catalytic activity of complex I. The protein is NADH-ubiquinone oxidoreductase chain 3 of Halichoerus grypus (Gray seal).